A 414-amino-acid chain; its full sequence is MENPSPTRTTNLQRIRSLYRLQEDKNNLNIPEPINGKVQEIDTKESLENVDRYGNYRSDFNVNNLGFYKVSKDPTLDKPNPAKRLGNKLIGHDDMLKYVDESIFMVVPGESHDRNEISAKELSRIQKWKSMCSIHLVSGNQLHSFRKTRKLILRTFKGIPDCWRSIAWWSFLVDSLPDKKLIDKYYQLNEQICDYDVQIDLDVPRTAATHFLFRKRYIGGQRLLFRVLHAVALYIPRVGYVQGMASIAATLLIYYPEEQAFIMMVNLLENRGMGDLFSSGFDTLLKAFDMLKHELSFTQSGRHLAEIGAEPSAFATRWYLTVFHQCVPFHTQLRIWDLLFLLGGSKGQTVRLLQATSLAVIQGMWDTLIDADFEVVMQALSGVIPIQNDNALLARIQLFWEKMPSENSSKSKRN.

Positions 158–343 constitute a Rab-GAP TBC domain; the sequence is GIPDCWRSIA…RIWDLLFLLG (186 aa).

The protein resides in the cytoplasm. It localises to the nucleus. The polypeptide is TBC domain-containing protein C1778.09 (Schizosaccharomyces pombe (strain 972 / ATCC 24843) (Fission yeast)).